We begin with the raw amino-acid sequence, 556 residues long: MNVMQENQIKLIEHIKQAVVQAVGLEETEVPEILLEVPKDKKHGDYSTNIAMQLARVAKKAPRQIAESIVPELKKDNKLIKEVEIAGPGFINFYLDNAYLTDLVPVILTEDKKYGESDFGKGEKFQIEFVSANPTGDLHLGHARGAAIGDSLANIMKMAGFDVSREYYINDAGNQINNLVLSAEARYFEALGLESEFPEDGYRGADIISLGKDLAAKYGDKYVHTSEEERRSIFRVDALAFETGKLRADLEEFRVSFDEWFSETSLYEENKVLPALERLRENGYIYEQDGATWLRTTDFEDDKDRVLIKSDGSYTYFLPDIAYHLNKLERGFDVLIDIWGADHHGYIPRMRAAIEALGYSPNQLEVEIIQLVHLFEDGVQVKMSKRTGKSVTMRDLIEEVGLDATRYFFAMRSSDTHMNFDMSLAKSTSNDNPVYYVQYAHARISSILRSGKEQGLEVTKDADMSLLQTEAEYDLLKVLGEFADVVAEAAAKRAPHRIVRYLNDLASAFHRFYNSNKVLDMDNLEVTKARLALIKTAQITLRNGLTLLGVSAPEKM.

The 'HIGH' region signature appears at 132 to 142 (ANPTGDLHLGH).

Belongs to the class-I aminoacyl-tRNA synthetase family. In terms of assembly, monomer.

The protein localises to the cytoplasm. The enzyme catalyses tRNA(Arg) + L-arginine + ATP = L-arginyl-tRNA(Arg) + AMP + diphosphate. The protein is Arginine--tRNA ligase of Listeria monocytogenes serovar 1/2a (strain ATCC BAA-679 / EGD-e).